Consider the following 374-residue polypeptide: MSIISRVCIPCAVLLFAQLHAKELVHVSQLKEQEARISWQEVPGAVSYRVLIRNAHGRIVTNAVATTRSYSFSRLRPGSYQYQIIAYDVLHRASASAWTSLSIEKVHKPKTGGITPSTIEHVVGGEAYTVVXDRXWTYEKGWTIALFPDDKADEAGAYVKPLSVSKNKEGNWMVAIPNAALKTGSYTLRAITPRNIYAEVRGILHVVLWRRPIFFYYDLSVGYAPVYRPQDHAATINGVSDFFKICSPIGFVGTFEMCFFKRNSSTISAGFNAQMHSDSKQVDVKLDGNFAYLYELYPRIEVGGMLGLGYSLPFGQRKEDDSMYSYVTGTMKYFFTNSIYLRVQQQHMLTVKPSFTGVSLQQTPSLSFGYRFHN.

Positions 1–21 (MSIISRVCIPCAVLLFAQLHA) are cleaved as a signal peptide. Residues 22–102 (KELVHVSQLK…ASASAWTSLS (81 aa)) enclose the Fibronectin type-III domain.

This is an uncharacterized protein from Treponema pallidum (strain Nichols).